The following is a 611-amino-acid chain: Major facilitator superfamily domain-containing protein YCR023C (611 aa).

The Extracellular portion of the chain corresponds to 1–89 (MARQKLTFKE…GRFSEKHGRK (89 aa)). A helical transmembrane segment spans residues 90 to 110 (ITLTCGLIGTSVSLLILGFSR). The Cytoplasmic portion of the chain corresponds to 111-152 (NFYQALVARSLMGLLNGNVGVIRTIIGEIATERKHQALAFST). The chain crosses the membrane as a helical span at residues 153-173 (MPLLFQFGAVVGPMIGGFLVF). The Extracellular segment spans residues 174–199 (RDGTMNEVPLWFPHFAKRIIRSYPYA). The chain crosses the membrane as a helical span at residues 200 to 220 (LPNVVVCMFLMFGLTNATLFL). At 221–353 (EETHPAFKDR…SIFHHVFHTK (133 aa)) the chain is on the cytoplasmic side. The segment covering 261–271 (DDSENIHHRNE) has biased composition (basic and acidic residues). Residues 261–301 (DDSENIHHRNENVNSIRGQDSEEDENSPLVNTTNDDDTESI) are disordered. Serine 313 carries the phosphoserine modification. The helical transmembrane segment at 354–372 (VFYPISVNFIMALHLIVYN) threads the bilayer. The Extracellular portion of the chain corresponds to 373–413 (EFLPVFLAYDLAVDPENPKKLASKFPWKISGGIGYEPEQTG). The helical transmembrane segment at 414–434 (TLLSTTGIFGCFVVIFIFPIV) threads the bilayer. Residues 435–442 (DRNFDCLT) lie on the Cytoplasmic side of the membrane. A helical membrane pass occupies residues 443–463 (IFRTLVKLYPIMYVMVPYVVF). Over 464–542 (LQNERIPSWY…YIMSWSQQND (79 aa)) the chain is Extracellular. A helical transmembrane segment spans residues 543–563 (VAWVSWWSLSLFCMVALYQSY). Residues 564-611 (KIAPIDDNENELHGQGSEDAYNSQSQSSDLRMAHRSSLSSLSNQRCTT) lie on the Cytoplasmic side of the membrane. Serine 603 is modified (phosphoserine).

This sequence belongs to the major facilitator superfamily.

The protein localises to the membrane. It catalyses the reaction chloride(in) = chloride(out). In terms of biological role, outward-rectifying chloride channel involved in chloride homeostasis. This is Major facilitator superfamily domain-containing protein YCR023C from Saccharomyces cerevisiae (strain ATCC 204508 / S288c) (Baker's yeast).